The sequence spans 674 residues: DNA ligase (674 aa).

Residues 34-38 (DAEYD), 84-85 (SL), and Glu-116 each bind NAD(+). The N6-AMP-lysine intermediate role is filled by Lys-118. NAD(+) is bound by residues Arg-139, Glu-174, Lys-291, and Lys-315. The Zn(2+) site is built by Cys-409, Cys-412, Cys-425, and Cys-430. A BRCT domain is found at 586 to 674 (REGEALKGLT…TGKDPRALTA (89 aa)).

It belongs to the NAD-dependent DNA ligase family. LigA subfamily. Mg(2+) serves as cofactor. It depends on Mn(2+) as a cofactor.

It catalyses the reaction NAD(+) + (deoxyribonucleotide)n-3'-hydroxyl + 5'-phospho-(deoxyribonucleotide)m = (deoxyribonucleotide)n+m + AMP + beta-nicotinamide D-nucleotide.. Its function is as follows. DNA ligase that catalyzes the formation of phosphodiester linkages between 5'-phosphoryl and 3'-hydroxyl groups in double-stranded DNA using NAD as a coenzyme and as the energy source for the reaction. It is essential for DNA replication and repair of damaged DNA. The polypeptide is DNA ligase (Thermus sp. (strain AK16D)).